A 55-amino-acid chain; its full sequence is Large ribosomal subunit protein bL33 (55 aa).

This sequence belongs to the bacterial ribosomal protein bL33 family.

The polypeptide is Large ribosomal subunit protein bL33 (Phenylobacterium zucineum (strain HLK1)).